The primary structure comprises 212 residues: HTH-type transcriptional regulator RutR (212 aa).

Positions 17-77 constitute an HTH tetR-type domain; sequence SAKKKAILSA…AVLRQILDIW (61 aa). Positions 39-58 form a DNA-binding region, H-T-H motif; the sequence is TRLEQIAELAGVSKTNLLYY.

Homodimer.

Master transcription regulator which represses the degradation of pyrimidines (rutABCDEFG) and purines (gcl operon) for maintenance of metabolic balance between pyrimidines and purines. It also regulates the synthesis of pyrimidine nucleotides and arginine from glutamine (carAB) and the supply of glutamate (gadABWX). The chain is HTH-type transcriptional regulator RutR (rutR) from Escherichia coli O6:H1 (strain CFT073 / ATCC 700928 / UPEC).